The sequence spans 113 residues: Photosystem II reaction center Psb28 protein (113 aa).

The protein belongs to the Psb28 family. In terms of assembly, part of the photosystem II complex.

The protein localises to the cellular thylakoid membrane. In Prochlorococcus marinus (strain NATL1A), this protein is Photosystem II reaction center Psb28 protein.